Reading from the N-terminus, the 367-residue chain is Flagellar P-ring protein (367 aa).

The first 22 residues, 1 to 22 (MRRMLVIRWILAIHLIATQVFA), serve as a signal peptide directing secretion.

This sequence belongs to the FlgI family. As to quaternary structure, the basal body constitutes a major portion of the flagellar organelle and consists of four rings (L,P,S, and M) mounted on a central rod.

Its subcellular location is the periplasm. The protein localises to the bacterial flagellum basal body. Its function is as follows. Assembles around the rod to form the L-ring and probably protects the motor/basal body from shearing forces during rotation. This Legionella pneumophila (strain Corby) protein is Flagellar P-ring protein.